A 658-amino-acid polypeptide reads, in one-letter code: Glycogen debranching enzyme (658 aa).

Catalysis depends on aspartate 336, which acts as the Nucleophile. Glutamate 371 serves as the catalytic Proton donor.

The protein belongs to the glycosyl hydrolase 13 family.

The enzyme catalyses Hydrolysis of (1-&gt;6)-alpha-D-glucosidic linkages to branches with degrees of polymerization of three or four glucose residues in limit dextrin.. The protein operates within glycan degradation; glycogen degradation. In terms of biological role, removes maltotriose and maltotetraose chains that are attached by 1,6-alpha-linkage to the limit dextrin main chain, generating a debranched limit dextrin. The polypeptide is Glycogen debranching enzyme (Klebsiella pneumoniae subsp. pneumoniae (strain ATCC 700721 / MGH 78578)).